The primary structure comprises 79 residues: DNA-directed RNA polymerase subunit omega (79 aa).

It belongs to the RNA polymerase subunit omega family. As to quaternary structure, in cyanobacteria the RNAP catalytic core is composed of 2 alpha, 1 beta, 1 beta', 1 gamma and 1 omega subunit. When a sigma factor is associated with the core the holoenzyme is formed, which can initiate transcription.

It catalyses the reaction RNA(n) + a ribonucleoside 5'-triphosphate = RNA(n+1) + diphosphate. In terms of biological role, promotes RNA polymerase assembly. Latches the N- and C-terminal regions of the beta' subunit thereby facilitating its interaction with the beta and alpha subunits. This Synechococcus sp. (strain JA-3-3Ab) (Cyanobacteria bacterium Yellowstone A-Prime) protein is DNA-directed RNA polymerase subunit omega.